A 229-amino-acid chain; its full sequence is Clathrin light chain B (229 aa).

Low complexity-rich tracts occupy residues 1–17 (MAED…GAPE) and 45–58 (GAPA…AQPG). The disordered stretch occupies residues 1–80 (MAEDFGFFSS…TVNGDVFQEA (80 aa)). Ser11 and Ser13 each carry phosphoserine. The tract at residues 93–155 (ADRLTQEPES…QVEKNKINNR (63 aa)) is involved in binding clathrin heavy chain. Thr187 is subject to Phosphothreonine. Cys199 and Cys209 form a disulfide bridge. Lys204 carries the post-translational modification N6-acetyllysine. Ser217 carries the post-translational modification Phosphoserine.

Belongs to the clathrin light chain family. As to quaternary structure, clathrin coats are formed from molecules containing 3 heavy chains and 3 light chains. Interacts (via N-terminus) with HIP1. Interacts with HIP1R.

It is found in the cytoplasmic vesicle membrane. Its subcellular location is the membrane. The protein resides in the coated pit. Functionally, clathrin is the major protein of the polyhedral coat of coated pits and vesicles. This Rattus norvegicus (Rat) protein is Clathrin light chain B (Cltb).